The following is a 458-amino-acid chain: Exodeoxyribonuclease 7 large subunit (458 aa).

Belongs to the XseA family. As to quaternary structure, heterooligomer composed of large and small subunits.

It is found in the cytoplasm. It carries out the reaction Exonucleolytic cleavage in either 5'- to 3'- or 3'- to 5'-direction to yield nucleoside 5'-phosphates.. In terms of biological role, bidirectionally degrades single-stranded DNA into large acid-insoluble oligonucleotides, which are then degraded further into small acid-soluble oligonucleotides. The sequence is that of Exodeoxyribonuclease 7 large subunit from Sodalis glossinidius (strain morsitans).